A 379-amino-acid chain; its full sequence is Cytochrome b (379 aa).

4 consecutive transmembrane segments (helical) span residues 33–53, 77–98, 113–133, and 178–198; these read FGSL…FLAM, WLIR…FIHV, WNIG…GYVL, and FFAF…VHLL. Residues His-83 and His-97 each coordinate heme b. Positions 182 and 196 each coordinate heme b. Position 201 (His-201) interacts with a ubiquinone. Transmembrane regions (helical) follow at residues 226–246, 288–308, 320–340, and 347–367; these read TKDL…ALFF, LGGV…PLLN, VTQV…WIGG, and FTTI…ILIP.

Belongs to the cytochrome b family. The cytochrome bc1 complex contains 11 subunits: 3 respiratory subunits (MT-CYB, CYC1 and UQCRFS1), 2 core proteins (UQCRC1 and UQCRC2) and 6 low-molecular weight proteins (UQCRH/QCR6, UQCRB/QCR7, UQCRQ/QCR8, UQCR10/QCR9, UQCR11/QCR10 and a cleavage product of UQCRFS1). This cytochrome bc1 complex then forms a dimer. It depends on heme b as a cofactor.

It is found in the mitochondrion inner membrane. Its function is as follows. Component of the ubiquinol-cytochrome c reductase complex (complex III or cytochrome b-c1 complex) that is part of the mitochondrial respiratory chain. The b-c1 complex mediates electron transfer from ubiquinol to cytochrome c. Contributes to the generation of a proton gradient across the mitochondrial membrane that is then used for ATP synthesis. This Akodon paranaensis (Parana grass mouse) protein is Cytochrome b (MT-CYB).